The sequence spans 163 residues: Nucleotide-binding protein SACE_6882 (163 aa).

The protein belongs to the YajQ family.

Its function is as follows. Nucleotide-binding protein. This chain is Nucleotide-binding protein SACE_6882, found in Saccharopolyspora erythraea (strain ATCC 11635 / DSM 40517 / JCM 4748 / NBRC 13426 / NCIMB 8594 / NRRL 2338).